We begin with the raw amino-acid sequence, 171 residues long: Disulfide bond formation protein B (171 aa).

Topologically, residues 1–8 (MRLSYRLV) are cytoplasmic. The helical transmembrane segment at 9–25 (SGLLVLASIVGMSFALY) threads the bilayer. At 26-43 (LEHVKGLEPCPLCIFQRV) the chain is on the periplasmic side. Cysteine 35 and cysteine 38 are oxidised to a cystine. A helical membrane pass occupies residues 44 to 60 (GLMAMGFVALIAFLHNP). The Cytoplasmic segment spans residues 61–67 (VSNAIKR). The chain crosses the membrane as a helical span at residues 68–85 (FYAFLAGVAILWSVGVAG). Residues 86–142 (RHVWLQHLPPDQVPSCGPGLNYLIDALPMKTVLQEVLSGSGECAAIDWTFLGQSLPV) are Periplasmic-facing. Cysteines 101 and 128 form a disulfide. A helical transmembrane segment spans residues 143–161 (WSLAYFLLLLLVCLWQLFR). Residues 162 to 171 (FYPVFKTAKK) are Cytoplasmic-facing.

It belongs to the DsbB family.

The protein resides in the cell inner membrane. In terms of biological role, required for disulfide bond formation in some periplasmic proteins. Acts by oxidizing the DsbA protein. The chain is Disulfide bond formation protein B from Acinetobacter baumannii (strain ATCC 17978 / DSM 105126 / CIP 53.77 / LMG 1025 / NCDC KC755 / 5377).